Here is a 450-residue protein sequence, read N- to C-terminus: Serine/threonine-protein kinase SSN3 (450 aa).

Residues 40 to 393 (YRIIGFISSG…AAQALQSPFF (354 aa)) form the Protein kinase domain. ATP is bound by residues 46–54 (ISSGTYGRV) and Lys71. Asp173 serves as the catalytic Proton acceptor. 2 disordered regions span residues 307–341 (ASSHHNHHSHHHPHHHHGHYGSRNPPPPGGSNLEK) and 418–450 (QDDNDIRTSSLPGTKRSGLPDDSLIRPAKRQKE). Residues 310–326 (HHNHHSHHHPHHHHGHY) show a composition bias toward basic residues.

It belongs to the protein kinase superfamily. CMGC Ser/Thr protein kinase family. CDC2/CDKX subfamily. As to quaternary structure, component of the SRB8-11 complex, a regulatory module of the Mediator complex. Interacts with SSN8/FCC1. Requires Mg(2+) as cofactor.

It localises to the nucleus. It catalyses the reaction L-seryl-[protein] + ATP = O-phospho-L-seryl-[protein] + ADP + H(+). It carries out the reaction L-threonyl-[protein] + ATP = O-phospho-L-threonyl-[protein] + ADP + H(+). The catalysed reaction is [DNA-directed RNA polymerase] + ATP = phospho-[DNA-directed RNA polymerase] + ADP + H(+). Functionally, component of the SRB8-11 complex. The SRB8-11 complex is a regulatory module of the Mediator complex which is itself involved in regulation of basal and activated RNA polymerase II-dependent transcription. The SRB8-11 complex may be involved in the transcriptional repression of a subset of genes regulated by Mediator. It may inhibit the association of the Mediator complex with RNA polymerase II to form the holoenzyme complex. The SRB8-11 complex phosphorylates the C-terminal domain (CTD) of the largest subunit of RNA polymerase II. Required for normal growth and secondary metabolism. This Gibberella moniliformis (Maize ear and stalk rot fungus) protein is Serine/threonine-protein kinase SSN3 (SSN3).